A 235-amino-acid chain; its full sequence is Exosome complex component RRP46 (235 aa).

Residues 1–21 (MEGAKRADANLLTDTGTESSP) are disordered. Over residues 12–21 (LTDTGTESSP) the composition is skewed to polar residues. Phosphoserine occurs at positions 20 and 23.

The protein belongs to the RNase PH family. In terms of assembly, homodimer. Component of the RNA exosome core complex (Exo-9), composed of EXOSC1, EXOSC2, EXOSC3, EXOSC4, EXOSC5, EXOSC6, EXOSC7, EXOSC8 and EXOSC9; within the complex interacts with EXOSC3, EXOSC8, and EXOSC9. The catalytically inactive RNA exosome core complex (Exo-9) associates with the catalytic subunit EXOSC10/RRP6. Exo-9 may associate with DIS3 to form the nucleolar exosome complex, or DIS3L to form the cytoplasmic exosome complex. Exo-9 is formed by a hexameric base ring consisting of the heterodimers EXOSC4-EXOSC9, EXOSC5-EXOSC8 and EXOSC6-EXOSC7, and a cap ring consisting of EXOSC1, EXOSC2 and EXOSC3. The RNA exosome complex associates with cofactors C1D/RRP47, MPHOSPH6/MPP6 and MTREX/MTR4. Interacts with GTPBP1. Interacts with ZC3HAV1. Interacts with DDX17 only in the presence of ZC3HAV1 in an RNA-independent manner.

It localises to the nucleus. Its subcellular location is the nucleolus. The protein localises to the cytoplasm. Its function is as follows. Non-catalytic component of the RNA exosome complex which has 3'-&gt;5' exoribonuclease activity and participates in a multitude of cellular RNA processing and degradation events. In the nucleus, the RNA exosome complex is involved in proper maturation of stable RNA species such as rRNA, snRNA and snoRNA, in the elimination of RNA processing by-products and non-coding 'pervasive' transcripts, such as antisense RNA species and promoter-upstream transcripts (PROMPTs), and of mRNAs with processing defects, thereby limiting or excluding their export to the cytoplasm. The RNA exosome may be involved in Ig class switch recombination (CSR) and/or Ig variable region somatic hypermutation (SHM) by targeting AICDA deamination activity to transcribed dsDNA substrates. In the cytoplasm, the RNA exosome complex is involved in general mRNA turnover and specifically degrades inherently unstable mRNAs containing AU-rich elements (AREs) within their 3' untranslated regions, and in RNA surveillance pathways, preventing translation of aberrant mRNAs. It seems to be involved in degradation of histone mRNA. The catalytic inactive RNA exosome core complex of 9 subunits (Exo-9) is proposed to play a pivotal role in the binding and presentation of RNA for ribonucleolysis, and to serve as a scaffold for the association with catalytic subunits and accessory proteins or complexes. In vitro, EXOSC5 does not bind or digest single-stranded RNA and binds to double-stranded DNA without detectable DNase activity. The polypeptide is Exosome complex component RRP46 (Exosc5) (Mus musculus (Mouse)).